We begin with the raw amino-acid sequence, 351 residues long: D-threonate 4-phosphate dehydrogenase (351 aa).

2 residues coordinate substrate: histidine 147 and threonine 148. 3 residues coordinate a divalent metal cation: histidine 177, histidine 221, and histidine 276. The substrate site is built by lysine 284, asparagine 293, and arginine 302.

It belongs to the PdxA family. PdxA2 subfamily. As to quaternary structure, homodimer. A divalent metal cation serves as cofactor.

It carries out the reaction 4-O-phospho-D-threonate + NAD(+) = dihydroxyacetone phosphate + CO2 + NADH. Its function is as follows. Catalyzes the NAD-dependent oxidation and subsequent decarboxylation of D-threonate 4-phosphate to produce dihydroxyacetone phosphate (DHAP). Can also use 4-hydroxy-L-threonine 4-phosphate as substrate. The protein is D-threonate 4-phosphate dehydrogenase of Bordetella bronchiseptica (strain ATCC BAA-588 / NCTC 13252 / RB50) (Alcaligenes bronchisepticus).